The chain runs to 270 residues: Nuclease P1 (270 aa).

The a divalent metal cation site is built by Trp1, His6, His15, Asp45, and His60. Residue 1–6 (WGALGH) participates in substrate binding. Residues 45–51 (DEYRLTS), 60–63 (HFID), and 73–78 (NVDYER) contribute to the substrate site. 2 cysteine pairs are disulfide-bonded: Cys72–Cys217 and Cys80–Cys85. Asn92 is a glycosylation site (N-linked (GlcNAc...) asparagine). A divalent metal cation is bound by residues His116, Asp120, and His126. Residues 116 to 164 (HFIGDMTQPLHDEAYAVGGNKINVTFDGYHDNLHSDWDTYMPQKLIGGH) are substrate binding. Residue Asn138 is glycosylated (N-linked (GlcNAc...) asparagine). His149 and Asp153 together coordinate a divalent metal cation. Residues Asn184 and Asn197 are each glycosylated (N-linked (GlcNAc...) asparagine).

This sequence belongs to the nuclease type I family. Zn(2+) is required as a cofactor.

The protein localises to the secreted. It carries out the reaction Endonucleolytic cleavage to 5'-phosphomononucleotide and 5'-phosphooligonucleotide end-products.. In terms of biological role, hydrolyzes only single-stranded DNA and RNA without apparent specificity for bases. This is Nuclease P1 from Penicillium citrinum.